The sequence spans 89 residues: Alpha-latrotoxin associated low molecular weight protein SGV242-280 (89 aa).

A signal peptide spans 1 to 18 (MSKLHFLILLSVIVSVFC).

This sequence belongs to the arthropod CHH/MIH/GIH/VIH hormone family. As to expression, expressed by the venom gland.

It is found in the secreted. Its function is as follows. May increase the toxicity of alpha-latrotoxin and/or other venom components. Is non-toxic to mice and to the cockroach Periplaneta americana. The polypeptide is Alpha-latrotoxin associated low molecular weight protein SGV242-280 (Steatoda grossa (False black widow)).